The primary structure comprises 470 residues: Chromosomal replication initiator protein DnaA (470 aa).

The segment at 1–68 (MENFWSLCLG…SALAEEVLST (68 aa)) is domain I, interacts with DnaA modulators. Residues 68 to 133 (TPVQIELALY…KKPKTLTETS (66 aa)) form a domain II region. The interval 134–350 (GLNPAFRFDN…GALNRIIAMA (217 aa)) is domain III, AAA+ region. 4 residues coordinate ATP: Gly-178, Gly-180, Lys-181, and Thr-182. The segment at 351-470 (NFTGHAIDVS…IAVLIQVIRD (120 aa)) is domain IV, binds dsDNA.

It belongs to the DnaA family. Oligomerizes as a right-handed, spiral filament on DNA at oriC.

It is found in the cytoplasm. In terms of biological role, plays an essential role in the initiation and regulation of chromosomal replication. ATP-DnaA binds to the origin of replication (oriC) to initiate formation of the DNA replication initiation complex once per cell cycle. Binds the DnaA box (a 9 base pair repeat at the origin) and separates the double-stranded (ds)DNA. Forms a right-handed helical filament on oriC DNA; dsDNA binds to the exterior of the filament while single-stranded (ss)DNA is stabiized in the filament's interior. The ATP-DnaA-oriC complex binds and stabilizes one strand of the AT-rich DNA unwinding element (DUE), permitting loading of DNA polymerase. After initiation quickly degrades to an ADP-DnaA complex that is not apt for DNA replication. Binds acidic phospholipids. The protein is Chromosomal replication initiator protein DnaA of Methylobacillus flagellatus (strain ATCC 51484 / DSM 6875 / VKM B-1610 / KT).